The chain runs to 910 residues: Leucine--tRNA ligase (910 aa).

The 'HIGH' region signature appears at 42-52; the sequence is PYPSGKLHMGH. Residues 658 to 662 carry the 'KMSKS' region motif; sequence TMSKS. Residue K661 coordinates ATP.

Belongs to the class-I aminoacyl-tRNA synthetase family.

Its subcellular location is the cytoplasm. It catalyses the reaction tRNA(Leu) + L-leucine + ATP = L-leucyl-tRNA(Leu) + AMP + diphosphate. The sequence is that of Leucine--tRNA ligase from Acidovorax ebreus (strain TPSY) (Diaphorobacter sp. (strain TPSY)).